Consider the following 715-residue polypeptide: Serine/arginine repetitive matrix protein 5 (715 aa).

Over residues 1–13 the composition is skewed to low complexity; the sequence is MSSPKRSSKPSMS. The disordered stretch occupies residues 1–715; the sequence is MSSPKRSSKP…RSSSSSSKLA (715 aa). Polar residues predominate over residues 32-59; sequence LKSTKSATPNRSLVPTKPATSRNSVMSP. Residues 60–79 are compositionally biased toward low complexity; the sequence is SSSKSTKSTSTKRAPSNRPS. Residues 80-90 show a composition bias toward basic residues; sequence SRSRVRSKART. Over residues 92-104 the composition is skewed to polar residues; sequence SRVSTDTRTSKAS. Over residues 112 to 136 the composition is skewed to basic residues; the sequence is HQRRGTHSRGRTPGRRGSRSSKRSP. Composition is skewed to polar residues over residues 213–224 and 257–272; these read TPSTAKCQTPTG and YSPT…YNQA. Residues 273-285 show a composition bias toward low complexity; that stretch reads STRSRPQSHSQSR. A compositionally biased stretch (basic residues) spans 286–320; it reads SPRRSRSGSQKRTHSRVRSHSWKRNHSRARSRTRK. Composition is skewed to basic and acidic residues over residues 359–388 and 397–521; these read PSKE…KESG and KQRD…ERDH. Positions 522–536 are enriched in basic residues; the sequence is RRSRSPSKERQRRQS. Basic and acidic residues-rich tracts occupy residues 539-595 and 611-628; these read PNKE…DHSR and SSKE…KEGN. Residues 657–666 show a composition bias toward polar residues; that stretch reads TRTSSLSQNR. The segment covering 667 to 681 has biased composition (low complexity); the sequence is TPSKTSSHSPSTFPS. Residues 682-715 show a composition bias toward polar residues; that stretch reads GGQTLSQDDSQADATTSKATLPGERSSSSSSKLA.

The chain is Serine/arginine repetitive matrix protein 5 (SRRM5) from Homo sapiens (Human).